The sequence spans 1052 residues: Focal adhesion kinase 1 (1052 aa).

The interval 1-27 (MAAAYLDPNLNHTPNSSTKTHLGTGME) is disordered. Ala2 is subject to N-acetylalanine. Tyr5 bears the Phosphotyrosine mark. Positions 10–21 (LNHTPNSSTKTH) are enriched in polar residues. The residue at position 13 (Thr13) is a Phosphothreonine. Phosphoserine occurs at positions 29 and 54. The region spanning 35–355 (RVLKVFHYFE…GYCRLVNGTS (321 aa)) is the FERM domain. A Glycyl lysine isopeptide (Lys-Gly) (interchain with G-Cter in SUMO) cross-link involves residue Lys152. Tyr397 carries the phosphotyrosine; by autocatalysis modification. Phosphotyrosine is present on Tyr407. Residues 422-680 (IELGRCIGEG…ELKAQLSTIL (259 aa)) enclose the Protein kinase domain. ATP contacts are provided by residues 428–434 (IGEGQFG), Lys454, and 500–502 (ELC). Asp546 functions as the Proton acceptor in the catalytic mechanism. At Tyr570 the chain carries Phosphotyrosine. Tyr576 and Tyr577 each carry phosphotyrosine; by RET and SRC. Residue Ser580 is modified to Phosphoserine. Basic and acidic residues predominate over residues 684–697 (KAQQEERMRMESRR). Disordered stretches follow at residues 684–734 (KAQQ…PSPQ) and 839–922 (LSRG…RSND). An interaction with TGFB1I1 region spans residues 707–1052 (GSDEAPPKPS…LKMLGQTRPH (346 aa)). Phosphoserine is present on Ser722. Ser732 bears the Phosphoserine; by CDK5 mark. Over residues 839–849 (LSRGSIDREDG) the composition is skewed to basic and acidic residues. Ser843 carries the post-translational modification Phosphoserine. At Tyr861 the chain carries Phosphotyrosine. A compositionally biased stretch (pro residues) spans 869 to 880 (PAAPPKKPPRPG). 2 positions are modified to phosphoserine: Ser887 and Ser910. Positions 912–1052 (PPTANLDRSN…LKMLGQTRPH (141 aa)) are interaction with ARHGEF28. Residue Thr914 is modified to Phosphothreonine. Tyr925 carries the phosphotyrosine modification.

Belongs to the protein kinase superfamily. Tyr protein kinase family. FAK subfamily. Interacts (via first Pro-rich region) with CAS family members (via SH3 domain), including BCAR1, BCAR3, and CASS4. Interacts with NEDD9 (via SH3 domain). Interacts with GIT1. Interacts with SORBS1. Interacts with ARHGEF28. Interacts with SHB. Part of a complex composed of THSD1, PTK2/FAK1, TLN1 and VCL. Interacts with PXN and TLN1. Interacts with STAT1. Interacts with DCC. Interacts with WASL. Interacts with ARHGEF7. Interacts with GRB2 and GRB7. Component of a complex that contains at least FER, CTTN and PTK2/FAK1. Interacts with BMX. Interacts with TGFB1I1. Interacts with STEAP4. Interacts with ZFYVE21. Interacts with ESR1. Interacts with PIK3R1 or PIK3R2. Interacts with SRC, FGR, FLT4 and RET. Interacts with EPHA2 in resting cells; activation of EPHA2 recruits PTPN11, leading to dephosphorylation of PTK2/FAK1 and dissociation of the complex. Interacts with EPHA1 (kinase activity-dependent). Interacts with CD4; this interaction requires the presence of HIV-1 gp120. Interacts with PIAS1. Interacts with ARHGAP26 and SHC1. Interacts with RB1CC1; this inhibits PTK2/FAK1 activity and activation of downstream signaling pathways. Interacts with P53/TP53 and MDM2. Interacts with LPXN (via LD motif 3). Interacts with MISP. Interacts with CIB1 isoform 2. Interacts with CD36. Interacts with EMP2; regulates PTK2 activation and localization. Interacts with DSCAM. Interacts with AMBRA1. Interacts (when tyrosine-phosphorylated) with tensin TNS1; the interaction is increased by phosphorylation of TNS1. Post-translationally, phosphorylated on tyrosine residues upon activation, e.g. upon integrin signaling. Tyr-397 is the major autophosphorylation site, but other kinases can also phosphorylate this residue. Phosphorylation at Tyr-397 promotes interaction with SRC and SRC family members, leading to phosphorylation at Tyr-576, Tyr-577 and at additional tyrosine residues. FGR promotes phosphorylation at Tyr-397 and Tyr-576. FER promotes phosphorylation at Tyr-577, Tyr-861 and Tyr-925, even when cells are not adherent. Tyr-397, Tyr-576 and Ser-722 are phosphorylated only when cells are adherent. Phosphorylation at Tyr-397 is important for interaction with BMX, PIK3R1 and SHC1. Phosphorylation at Tyr-925 is important for interaction with GRB2. Dephosphorylated by PTPN11; PTPN11 is recruited to PTK2 via EPHA2 (tyrosine phosphorylated). Microtubule-induced dephosphorylation at Tyr-397 is crucial for the induction of focal adhesion disassembly; this dephosphorylation could be catalyzed by PTPN11 and regulated by ZFYVE21. Phosphorylation on tyrosine residues is enhanced by NTN1. Sumoylated; this enhances autophosphorylation. Detected in B and T-lymphocytes. Isoform 1 and isoform 6 are detected in lung fibroblasts (at protein level). Ubiquitous. Expressed in epithelial cells (at protein level).

It localises to the cell junction. Its subcellular location is the focal adhesion. The protein resides in the cell membrane. It is found in the cytoplasm. The protein localises to the perinuclear region. It localises to the cell cortex. Its subcellular location is the cytoskeleton. The protein resides in the microtubule organizing center. It is found in the centrosome. The protein localises to the nucleus. It localises to the cilium basal body. The enzyme catalyses L-tyrosyl-[protein] + ATP = O-phospho-L-tyrosyl-[protein] + ADP + H(+). With respect to regulation, subject to autoinhibition, mediated by interactions between the FERM domain and the kinase domain. Activated by autophosphorylation at Tyr-397. This promotes interaction with SRC and phosphorylation at Tyr-576 and Tyr-577 in the kinase activation loop. Phosphorylation at Tyr-576 and Tyr-577 is required for maximal kinase activity. Inhibited by TAC544, TAE226, PF-573,228 and PF-562,271. Its function is as follows. Non-receptor protein-tyrosine kinase that plays an essential role in regulating cell migration, adhesion, spreading, reorganization of the actin cytoskeleton, formation and disassembly of focal adhesions and cell protrusions, cell cycle progression, cell proliferation and apoptosis. Required for early embryonic development and placenta development. Required for embryonic angiogenesis, normal cardiomyocyte migration and proliferation, and normal heart development. Regulates axon growth and neuronal cell migration, axon branching and synapse formation; required for normal development of the nervous system. Plays a role in osteogenesis and differentiation of osteoblasts. Functions in integrin signal transduction, but also in signaling downstream of numerous growth factor receptors, G-protein coupled receptors (GPCR), EPHA2, netrin receptors and LDL receptors. Forms multisubunit signaling complexes with SRC and SRC family members upon activation; this leads to the phosphorylation of additional tyrosine residues, creating binding sites for scaffold proteins, effectors and substrates. Regulates numerous signaling pathways. Promotes activation of phosphatidylinositol 3-kinase and the AKT1 signaling cascade. Promotes activation of MAPK1/ERK2, MAPK3/ERK1 and the MAP kinase signaling cascade. Promotes localized and transient activation of guanine nucleotide exchange factors (GEFs) and GTPase-activating proteins (GAPs), and thereby modulates the activity of Rho family GTPases. Signaling via CAS family members mediates activation of RAC1. Phosphorylates NEDD9 following integrin stimulation. Recruits the ubiquitin ligase MDM2 to P53/TP53 in the nucleus, and thereby regulates P53/TP53 activity, P53/TP53 ubiquitination and proteasomal degradation. Phosphorylates SRC; this increases SRC kinase activity. Phosphorylates ACTN1, ARHGEF7, GRB7, RET and WASL. Promotes phosphorylation of PXN and STAT1; most likely PXN and STAT1 are phosphorylated by a SRC family kinase that is recruited to autophosphorylated PTK2/FAK1, rather than by PTK2/FAK1 itself. Promotes phosphorylation of BCAR1; GIT2 and SHC1; this requires both SRC and PTK2/FAK1. Promotes phosphorylation of BMX and PIK3R1. Isoform 6 (FRNK) does not contain a kinase domain and inhibits PTK2/FAK1 phosphorylation and signaling. Its enhanced expression can attenuate the nuclear accumulation of LPXN and limit its ability to enhance serum response factor (SRF)-dependent gene transcription. Functionally, isoform 6 (FRNK) does not contain a kinase domain and inhibits PTK2/FAK1 phosphorylation and signaling. Its enhanced expression can attenuate the nuclear accumulation of LPXN and limit its ability to enhance serum response factor (SRF)-dependent gene transcription. This Homo sapiens (Human) protein is Focal adhesion kinase 1.